The primary structure comprises 428 residues: Proline--tRNA ligase (428 aa).

It belongs to the class-II aminoacyl-tRNA synthetase family. ProS type 2 subfamily. Homodimer.

It localises to the cytoplasm. The enzyme catalyses tRNA(Pro) + L-proline + ATP = L-prolyl-tRNA(Pro) + AMP + diphosphate. Functionally, catalyzes the attachment of proline to tRNA(Pro) in a two-step reaction: proline is first activated by ATP to form Pro-AMP and then transferred to the acceptor end of tRNA(Pro). This is Proline--tRNA ligase from Rickettsia typhi (strain ATCC VR-144 / Wilmington).